Here is a 304-residue protein sequence, read N- to C-terminus: Ferrochelatase (304 aa).

Residues H169 and E241 each coordinate Fe cation.

It belongs to the ferrochelatase family.

It is found in the cytoplasm. It carries out the reaction heme b + 2 H(+) = protoporphyrin IX + Fe(2+). The protein operates within porphyrin-containing compound metabolism; protoheme biosynthesis; protoheme from protoporphyrin-IX: step 1/1. Functionally, catalyzes the ferrous insertion into protoporphyrin IX. The polypeptide is Ferrochelatase (Thermoplasma volcanium (strain ATCC 51530 / DSM 4299 / JCM 9571 / NBRC 15438 / GSS1)).